We begin with the raw amino-acid sequence, 302 residues long: Olfactory receptor 51H1 (302 aa).

At 1 to 27 the chain is on the extracellular side; it reads MTNLNASQANHRNFILTGIPGTPDKNP. Residue Asn5 is glycosylated (N-linked (GlcNAc...) asparagine). The helical transmembrane segment at 28–48 threads the bilayer; that stretch reads WLAFPLGFLYTLTLLGNGTIL. Residues 49–56 are Cytoplasmic-facing; that stretch reads AVIKVEPS. A helical membrane pass occupies residues 57–77; that stretch reads LHEPTYYFLSILALTDVSLSM. The Extracellular segment spans residues 78–101; sequence STLPSMLSIYWFNAPQIVFDACIM. An intrachain disulfide couples Cys99 to Cys191. The chain crosses the membrane as a helical span at residues 102–122; that stretch reads QMFFIHVFGIVESGVLVSMAF. At 123–141 the chain is on the cytoplasmic side; that stretch reads DRFVAIRNPLHYVSILTHD. The chain crosses the membrane as a helical span at residues 142-162; the sequence is VIRKTGIAVLTRAVCVVFPVP. Over 163 to 198 the chain is Extracellular; the sequence is FLIKCLPFCHSNVLSHSYCLHQNMMRLACASTRINS. A helical transmembrane segment spans residues 199–219; sequence LYGLIVVIFTLGLDVLLTLLS. The Cytoplasmic portion of the chain corresponds to 220 to 239; it reads YVLTLKTVLGIVSRGERLKT. The chain crosses the membrane as a helical span at residues 240–260; that stretch reads LSTCLSHMSTVLLFYVPFMGA. Over 261–276 the chain is Extracellular; the sequence is ASMIHRFWEHLSPVVH. Residues 277-297 traverse the membrane as a helical segment; the sequence is MVMADIYLLLPPVLNPIVYSV. The Cytoplasmic portion of the chain corresponds to 298–302; the sequence is KTKQI.

Belongs to the G-protein coupled receptor 1 family.

Its subcellular location is the cell membrane. Its function is as follows. Odorant receptor. This chain is Olfactory receptor 51H1 (OR51H1), found in Homo sapiens (Human).